The sequence spans 488 residues: uncharacterized protein (488 aa).

Residue 27–38 participates in NAD(+) binding; the sequence is IVHFGFGAFHRA.

This sequence belongs to the mannitol dehydrogenase family. UxuB subfamily.

This is an uncharacterized protein from Escherichia coli (strain K12).